The sequence spans 278 residues: Large ribosomal subunit protein uL2 (278 aa).

2 disordered regions span residues 1–53 (MAIR…TTRH) and 224–278 (VVMN…NKKR). Positions 23–33 (EITRSTPEKSL) are enriched in basic and acidic residues. A compositionally biased stretch (polar residues) spans 258 to 267 (RNPNRYSNNM). Basic residues predominate over residues 269 to 278 (VRRRRPNKKR).

Belongs to the universal ribosomal protein uL2 family. Part of the 50S ribosomal subunit. Forms a bridge to the 30S subunit in the 70S ribosome.

Functionally, one of the primary rRNA binding proteins. Required for association of the 30S and 50S subunits to form the 70S ribosome, for tRNA binding and peptide bond formation. It has been suggested to have peptidyltransferase activity; this is somewhat controversial. Makes several contacts with the 16S rRNA in the 70S ribosome. This chain is Large ribosomal subunit protein uL2, found in Corynebacterium aurimucosum (strain ATCC 700975 / DSM 44827 / CIP 107346 / CN-1) (Corynebacterium nigricans).